Consider the following 173-residue polypeptide: Copper transport protein ctr5 (173 aa).

Topologically, residues 1–54 (MSLSKMSMSGMSGMGMGSSSNSSAATCRMSMLWNWYIHDSCFLAKSWHINTGNK) are extracellular. Residues 55–75 (FAGSIIGIFFFAVAIEGLSLV) form a helical membrane-spanning segment. Topologically, residues 76-135 (QRMFDRWIVAHSNGKTLSGPLRIFFPSSTVHVTVWQQLIRAAMYSSFYLSATILMLIVMS) are cytoplasmic. A helical transmembrane segment spans residues 136 to 156 (FNGYAILFGFVGAWIGFFLFA). Over 157-173 (SDTYGTPSTGTGCCESR) the chain is Extracellular.

The protein belongs to the copper transporter (Ctr) (TC 1.A.56) family. SLC31A subfamily. In terms of assembly, interacts with ctr4.

Its subcellular location is the membrane. In terms of biological role, required for high affinity copper (probably reduced Cu I) transport into the cell. The sequence is that of Copper transport protein ctr5 (ctr5) from Schizosaccharomyces pombe (strain 972 / ATCC 24843) (Fission yeast).